Reading from the N-terminus, the 293-residue chain is Ribosomal protein L11 methyltransferase (293 aa).

S-adenosyl-L-methionine is bound by residues Thr-145, Gly-166, Asp-188, and Asn-230.

It belongs to the methyltransferase superfamily. PrmA family.

Its subcellular location is the cytoplasm. It catalyses the reaction L-lysyl-[protein] + 3 S-adenosyl-L-methionine = N(6),N(6),N(6)-trimethyl-L-lysyl-[protein] + 3 S-adenosyl-L-homocysteine + 3 H(+). In terms of biological role, methylates ribosomal protein L11. This chain is Ribosomal protein L11 methyltransferase, found in Actinobacillus pleuropneumoniae serotype 5b (strain L20).